The chain runs to 415 residues: Serine hydroxymethyltransferase (415 aa).

Residues Leu-122 and 126 to 128 contribute to the (6S)-5,6,7,8-tetrahydrofolate site; that span reads GHL. Lys-230 carries the N6-(pyridoxal phosphate)lysine modification.

Belongs to the SHMT family. Homodimer. The cofactor is pyridoxal 5'-phosphate.

The protein localises to the cytoplasm. The catalysed reaction is (6R)-5,10-methylene-5,6,7,8-tetrahydrofolate + glycine + H2O = (6S)-5,6,7,8-tetrahydrofolate + L-serine. Its pathway is one-carbon metabolism; tetrahydrofolate interconversion. The protein operates within amino-acid biosynthesis; glycine biosynthesis; glycine from L-serine: step 1/1. In terms of biological role, catalyzes the reversible interconversion of serine and glycine with tetrahydrofolate (THF) serving as the one-carbon carrier. This reaction serves as the major source of one-carbon groups required for the biosynthesis of purines, thymidylate, methionine, and other important biomolecules. Also exhibits THF-independent aldolase activity toward beta-hydroxyamino acids, producing glycine and aldehydes, via a retro-aldol mechanism. This Leptothrix cholodnii (strain ATCC 51168 / LMG 8142 / SP-6) (Leptothrix discophora (strain SP-6)) protein is Serine hydroxymethyltransferase.